The sequence spans 502 residues: Glycerol kinase (502 aa).

Thr14 contacts ADP. Residues Thr14, Thr15, and Ser16 each coordinate ATP. Residue Thr14 participates in sn-glycerol 3-phosphate binding. An ADP-binding site is contributed by Arg18. Positions 84, 85, 136, and 246 each coordinate sn-glycerol 3-phosphate. Glycerol contacts are provided by Arg84, Glu85, Tyr136, Asp246, and Gln247. Positions 268 and 311 each coordinate ADP. 4 residues coordinate ATP: Thr268, Gly311, Gln315, and Gly412. The ADP site is built by Gly412 and Asn416.

Belongs to the FGGY kinase family. As to quaternary structure, homotetramer and homodimer (in equilibrium). Heterodimer with EIIA-Glc. Binds 1 zinc ion per glycerol kinase EIIA-Glc dimer. The zinc ion is important for dimerization.

The catalysed reaction is glycerol + ATP = sn-glycerol 3-phosphate + ADP + H(+). It functions in the pathway polyol metabolism; glycerol degradation via glycerol kinase pathway; sn-glycerol 3-phosphate from glycerol: step 1/1. Activity of this regulatory enzyme is affected by several metabolites. Allosterically and non-competitively inhibited by fructose 1,6-bisphosphate (FBP) and unphosphorylated phosphocarrier protein EIIA-Glc (III-Glc), an integral component of the bacterial phosphotransferase (PTS) system. Key enzyme in the regulation of glycerol uptake and metabolism. Catalyzes the phosphorylation of glycerol to yield sn-glycerol 3-phosphate. The protein is Glycerol kinase of Salmonella agona (strain SL483).